The sequence spans 818 residues: Serine/threonine-protein phosphatase 4 regulatory subunit 3 (818 aa).

Residues 1-100 (MTDTRRRVKV…DEIWEKICQV (100 aa)) form the WH1 domain. The tract at residues 718-818 (LAKSSFSGRQ…PPSKKSRLSS (101 aa)) is disordered. Over residues 721–730 (SSFSGRQNPS) the composition is skewed to polar residues. The span at 736-756 (SGSTKTSLSSPPPSASLSPGS) shows a compositional bias: low complexity. A compositionally biased stretch (acidic residues) spans 788 to 804 (YPDDDEEEEDDDDEESK).

The protein belongs to the SMEK family. As to quaternary structure, serine/threonine-protein phosphatase 4 (PP4) occurs in different assemblies of the catalytic and one or more regulatory subunits.

Functionally, regulatory subunit of serine/threonine-protein phosphatase 4. The polypeptide is Serine/threonine-protein phosphatase 4 regulatory subunit 3 (smek1) (Tetraodon nigroviridis (Spotted green pufferfish)).